Reading from the N-terminus, the 308-residue chain is MGEDRRSLRVDYDDNFLRNNICSLKVSFIKQQGGAEGVKRLYADLGLALVALIWGSTFPVVKIALDSMSPFAFNTVRFFIACLFFLPFLKGWDFKDGFKIGIASFLGYTFQTVGLDYTTATNAGFITSTYVVLAPIISWLVYKDVFDKRDVSGVLLAFVGFYFLSGYSGFNIGDILMLFCALFFGAEIAMISHYSRLSNPTMLAFWQSFAIFILSAPFAVFTTTKFEINTTVILCLLITAFFATFVAKMLQNWLQSYTKSSDAAVILSLEGVFAHLFSVAVLAEILTPVQYFGAFLILLAVIIVSLRV.

The next 10 membrane-spanning stretches (helical) occupy residues 45-65 (LGLALVALIWGSTFPVVKIAL), 69-89 (SPFAFNTVRFFIACLFFLPFL), 100-120 (IGIASFLGYTFQTVGLDYTTA), 122-142 (NAGFITSTYVVLAPIISWLVY), 151-171 (VSGVLLAFVGFYFLSGYSGFN), 172-192 (IGDILMLFCALFFGAEIAMIS), 201-221 (TMLAFWQSFAIFILSAPFAVF), 226-246 (FEINTTVILCLLITAFFATFV), 263-283 (AAVILSLEGVFAHLFSVAVLA), and 285-305 (ILTPVQYFGAFLILLAVIIVS). 2 consecutive EamA domains span residues 52-166 (LIWG…FLSG) and 178-306 (LFCA…IVSL).

Belongs to the EamA transporter family.

It localises to the cell membrane. This is an uncharacterized protein from Archaeoglobus fulgidus (strain ATCC 49558 / DSM 4304 / JCM 9628 / NBRC 100126 / VC-16).